A 481-amino-acid polypeptide reads, in one-letter code: Anti-sigma-I factor RsgI5 (481 aa).

Residues 1–50 (MKHKGIVLKLTKSKAIISTNDFQCYYIKRSPTIYVGKEVEFTNKDIVTKK) lie on the Cytoplasmic side of the membrane. A RsgI N-terminal anti-sigma domain is found at 3–50 (HKGIVLKLTKSKAIISTNDFQCYYIKRSPTIYVGKEVEFTNKDIVTKK). A helical membrane pass occupies residues 51–71 (SVLIKPALSVACFILLIACVL). Over 72-481 (SLSKIINNIS…DATFIGIKVD (410 aa)) the chain is Extracellular. Residues 255–339 (ASEERNPEES…TPTPTPTPAD (85 aa)) are disordered. Positions 256-265 (SEERNPEESP) are enriched in basic and acidic residues. 2 stretches are compositionally biased toward low complexity: residues 266 to 283 (KMTP…TPTD) and 291 to 315 (NTPT…TSTP). Positions 316 to 336 (APKPTSTPTPTLMPTPTPTPT) are enriched in pro residues.

In terms of assembly, interacts (via RsgI N-terminal anti-sigma domain) with SigI5.

It localises to the cell membrane. In terms of biological role, anti-sigma factor for SigI5. Negatively regulates SigI5 activity through direct interaction. Binding of the polysaccharide substrate to the extracellular C-terminal sensing domain of RsgI5 may induce a conformational change in its N-terminal cytoplasmic region, leading to the release and activation of SigI5. This is Anti-sigma-I factor RsgI5 from Acetivibrio thermocellus (strain ATCC 27405 / DSM 1237 / JCM 9322 / NBRC 103400 / NCIMB 10682 / NRRL B-4536 / VPI 7372) (Clostridium thermocellum).